The chain runs to 468 residues: Ribulose bisphosphate carboxylase large chain (468 aa).

Lysine 5 bears the N6,N6,N6-trimethyllysine mark. 2 residues coordinate substrate: asparagine 114 and threonine 164. The active-site Proton acceptor is lysine 166. Lysine 168 provides a ligand contact to substrate. Residues lysine 192, aspartate 194, and glutamate 195 each contribute to the Mg(2+) site. An N6-carboxylysine modification is found at lysine 192. The active-site Proton acceptor is the histidine 285. Substrate-binding residues include arginine 286, histidine 318, and serine 370.

Belongs to the RuBisCO large chain family. Type I subfamily. In terms of assembly, heterohexadecamer of 8 large chains and 8 small chains; disulfide-linked. The disulfide link is formed within the large subunit homodimers. The cofactor is Mg(2+). In terms of processing, the disulfide bond which can form in the large chain dimeric partners within the hexadecamer appears to be associated with oxidative stress and protein turnover.

It localises to the plastid. The protein localises to the chloroplast. The enzyme catalyses 2 (2R)-3-phosphoglycerate + 2 H(+) = D-ribulose 1,5-bisphosphate + CO2 + H2O. It carries out the reaction D-ribulose 1,5-bisphosphate + O2 = 2-phosphoglycolate + (2R)-3-phosphoglycerate + 2 H(+). RuBisCO catalyzes two reactions: the carboxylation of D-ribulose 1,5-bisphosphate, the primary event in carbon dioxide fixation, as well as the oxidative fragmentation of the pentose substrate in the photorespiration process. Both reactions occur simultaneously and in competition at the same active site. The polypeptide is Ribulose bisphosphate carboxylase large chain (Catesbaea spinosa).